The primary structure comprises 356 residues: Non-functional pseudokinase ZRK15 (356 aa).

In terms of domain architecture, Protein kinase spans 62-356 (NRVSELFDEI…SSSSCGETSL (295 aa)). ATP is bound by residues 68–76 (FDEIPYDWY) and Lys94.

Belongs to the protein kinase superfamily. Ser/Thr protein kinase family. ZRK subfamily. As to quaternary structure, interacts with RPP13L4/ZAR1.

In Arabidopsis thaliana (Mouse-ear cress), this protein is Non-functional pseudokinase ZRK15.